A 337-amino-acid polypeptide reads, in one-letter code: Primase homolog protein (337 aa).

Residues 205-304 enclose the Toprim domain; sequence SEIIIVEGEP…WLVKWPKKSE (100 aa). Residues Glu-211, Asp-273, and Asp-275 each contribute to the Mg(2+) site.

It depends on Mg(2+) as a cofactor.

Its function is as follows. May act as a DNA primase. The chain is Primase homolog protein from Arabidopsis thaliana (Mouse-ear cress).